The sequence spans 217 residues: GTP cyclohydrolase 1 (217 aa).

The Zn(2+) site is built by C109, H112, and C180.

This sequence belongs to the GTP cyclohydrolase I family. As to quaternary structure, toroid-shaped homodecamer, composed of two pentamers of five dimers.

The enzyme catalyses GTP + H2O = 7,8-dihydroneopterin 3'-triphosphate + formate + H(+). It participates in cofactor biosynthesis; 7,8-dihydroneopterin triphosphate biosynthesis; 7,8-dihydroneopterin triphosphate from GTP: step 1/1. In Vibrio vulnificus (strain CMCP6), this protein is GTP cyclohydrolase 1.